Consider the following 581-residue polypeptide: Suppressor of cytokine signaling 7 (581 aa).

Disordered stretches follow at residues 1–23 (MVFRNVGRPPEEEDVEAAPEPGP), 89–109 (PPPPQPQPPAAAPQAGEDPTE), 123–272 (EAES…RTQS), and 297–316 (QRGLTSPHPPTPPPPPRRSL). Pro residues-rich tracts occupy residues 89-99 (PPPPQPQPPAA), 154-164 (PPGPELPPVPF), and 187-198 (QPPPPPPPPGPL). The tract at residues 124 to 494 (AESLETNSCS…GKFLYFLRSR (371 aa)) is mediates interaction with SORBS3. Residues 208-219 (GSFKIRLSRLFR) show a composition bias toward basic residues. The span at 303 to 313 (PHPPTPPPPPR) shows a compositional bias: pro residues. Residues 400–509 (WYWGPMNWED…PTPVQLLYPV (110 aa)) form the SH2 domain. The 51-residue stretch at 504 to 554 (QLLYPVSRFSNVKSLQHLCRFRIRQLVRIDHIPDLPLPKPLISYIRKFYYY) folds into the SOCS box domain.

In terms of assembly, substrate-recognition component of the ECS(SOCS7) complex, composed of SOCS7, CUL5, ELOB, ELOC and RNF7/RBX2. Interacts, via the third proline-rich region, with the second SH3 domain of the adapter protein NCK1. Also interacts with GRB2, INSR, PLCG1, SORBS3/vinexin, and phosphorylated STAT3 and STAT5. Interacts with SEPT6. Interacts with phosphorylated IRS4 and PIK3R1. Expressed in brain and leukocytes. Also in fetal lung fibroblasts and fetal brain.

It is found in the cytoplasm. The protein localises to the nucleus. The protein resides in the cell membrane. The protein operates within protein modification; protein ubiquitination. In terms of biological role, substrate-recognition component of a cullin-5-RING E3 ubiquitin-protein ligase complex (ECS complex, also named CRL5 complex), which mediates the ubiquitination and subsequent proteasomal degradation of target proteins, such as DAB1 and IRS1. Specifically recognizes and binds phosphorylated proteins via its SH2 domain, promoting their ubiquitination. The ECS(SOCS7) complex acts as a key regulator of reelin signaling by mediating ubiquitination and degradation of phosphorylated DAB1 in the cortical plate of the developing cerebral cortex, thereby regulating neuron positioning during cortex development. Functions in insulin signaling and glucose homeostasis through IRS1 ubiquitination and subsequent proteasomal degradation. Also inhibits prolactin, growth hormone and leptin signaling by preventing STAT3 and STAT5 activation, sequestering them in the cytoplasm and reducing their binding to DNA. The polypeptide is Suppressor of cytokine signaling 7 (Homo sapiens (Human)).